The primary structure comprises 492 residues: Beta-Ala-His dipeptidase (492 aa).

Histidine 107 provides a ligand contact to Zn(2+). Residue aspartate 109 is part of the active site. Zn(2+) is bound at residue aspartate 140. The Proton acceptor role is filled by glutamate 174. Zn(2+) is bound at residue glutamate 175. Serine 194 carries the phosphoserine modification. Residues aspartate 203 and histidine 453 each coordinate Zn(2+).

The protein belongs to the peptidase M20A family. Homodimer. It depends on Zn(2+) as a cofactor. In terms of tissue distribution, detected exclusively in kidney.

It localises to the secreted. It carries out the reaction Preferential hydrolysis of the beta-Ala-|-His dipeptide (carnosine), and also anserine, Xaa-|-His dipeptides and other dipeptides including homocarnosine.. The catalysed reaction is carnosine + H2O = beta-alanine + L-histidine. The enzyme catalyses anserine + H2O = N(pros)-methyl-L-histidine + beta-alanine. It catalyses the reaction L-alanyl-L-histidine + H2O = L-histidine + L-alanine. It carries out the reaction glycyl-L-histidine + H2O = L-histidine + glycine. The catalysed reaction is L-homocarnosine + H2O = 4-aminobutanoate + L-histidine. In terms of biological role, catalyzes the peptide bond hydrolysis in Xaa-His dipeptides, displaying the highest activity toward carnosine (beta-alanyl-L-histidine) and anserine (beta-alanyl-3-methyl-histidine). The sequence is that of Beta-Ala-His dipeptidase (Cndp1) from Rattus norvegicus (Rat).